Reading from the N-terminus, the 277-residue chain is MLLNILDIQAKKGLEKIACLTAYTFPMARILDEHCDLILVGDSVGQTVYGMESTLSVTLDMMIAHGKAVVKARSKALVVVDMPFASYYTPELAYKNASRILSETGCDAVKLEGGVCVAEEIAFLVARGIPVMGHVGLMPQHFNQLGGYKCQGKTDSSRQHIKEDAKAVCEAGAFCVVLECISPSLAAELTQELPVPTIGIGASNACDGQILVVDDMLGQSSRYPKFVKRFADLEHTIKDAVVGYVRAVKCSEFPGDEHCYSDGPHLRVFRAHPHHAQ.

The Mg(2+) site is built by Asp42 and Asp81. 3-methyl-2-oxobutanoate contacts are provided by residues 42-43 (DS), Asp81, and Lys110. A Mg(2+)-binding site is contributed by Glu112. The active-site Proton acceptor is the Glu179.

The protein belongs to the PanB family. As to quaternary structure, homodecamer; pentamer of dimers. Mg(2+) serves as cofactor.

Its subcellular location is the cytoplasm. It carries out the reaction 3-methyl-2-oxobutanoate + (6R)-5,10-methylene-5,6,7,8-tetrahydrofolate + H2O = 2-dehydropantoate + (6S)-5,6,7,8-tetrahydrofolate. It functions in the pathway cofactor biosynthesis; (R)-pantothenate biosynthesis; (R)-pantoate from 3-methyl-2-oxobutanoate: step 1/2. In terms of biological role, catalyzes the reversible reaction in which hydroxymethyl group from 5,10-methylenetetrahydrofolate is transferred onto alpha-ketoisovalerate to form ketopantoate. This is 3-methyl-2-oxobutanoate hydroxymethyltransferase from Anaplasma marginale (strain St. Maries).